Here is a 449-residue protein sequence, read N- to C-terminus: Probable hexaprenyl pyrophosphate synthase, mitochondrial (449 aa).

Residues lysine 122, arginine 125, and histidine 200 each coordinate isopentenyl diphosphate. Mg(2+)-binding residues include aspartate 207 and aspartate 211. Arginine 216 provides a ligand contact to an all-trans-polyprenyl diphosphate. Arginine 217 contributes to the isopentenyl diphosphate binding site. Residues lysine 300, threonine 301, glutamine 338, and lysine 355 each coordinate an all-trans-polyprenyl diphosphate.

Belongs to the FPP/GGPP synthase family. Mg(2+) serves as cofactor.

It localises to the mitochondrion. It participates in cofactor biosynthesis; ubiquinone biosynthesis. Assembly of polyisoprenoid side chains. The polyprenyl synthase of coenzyme Q biosynthesis catalyzes the formation from isopentenyl diphosphate of all trans-polyprenyl pyrophosphates generally ranging in length of between 6 and 10 isoprene units depending on the species. The polypeptide is Probable hexaprenyl pyrophosphate synthase, mitochondrial (Neurospora crassa (strain ATCC 24698 / 74-OR23-1A / CBS 708.71 / DSM 1257 / FGSC 987)).